Here is a 956-residue protein sequence, read N- to C-terminus: Endogenous retrovirus group K member 6 Pol protein (956 aa).

One can recognise a Reverse transcriptase domain in the interval 57–245 (LEKGHIEPSF…TPFHYLGMQI (189 aa)). Positions 161–164 (LPQG) match the LPQG motif. A YXDD motif is present at residues 195 to 198 (CIDD). The RNase H type-1 domain maps to 460–590 (LENALTVFTD…ADLLVSSALI (131 aa)). Positions 469, 497, 517, and 582 each coordinate Mg(2+). The segment at 587-628 (SALIKAQELHALTHVNAAGLKNKFDVTWKQAKDIVQHCTQCQ) adopts an Integrase-type zinc-finger fold. Residues His-596, His-600, Cys-624, and Cys-627 each contribute to the Zn(2+) site. Residues 642 to 803 (RGLCPNALWQ…TSAEQHLTGK (162 aa)) enclose the Integrase catalytic domain. A DNA-binding region (integrase-type) is located at residues 811–859 (KLIWWKDNKNKTWEIGKVITWGRGFACVSPGENQLPVWIPTRHLKFYNE). Residues 865–890 (KKSTSAETETSQSSTVDSQDEQNGDV) form a disordered region. The span at 869 to 879 (SAETETSQSST) shows a compositional bias: low complexity.

The protein belongs to the beta type-B retroviral polymerase family. HERV class-II K(HML-2) pol subfamily. Cleavage sites that yield the mature proteins remain to be determined.

It carries out the reaction DNA(n) + a 2'-deoxyribonucleoside 5'-triphosphate = DNA(n+1) + diphosphate. The enzyme catalyses Endonucleolytic cleavage to 5'-phosphomonoester.. Its function is as follows. Early post-infection, the reverse transcriptase converts the viral RNA genome into double-stranded viral DNA. The RNase H domain of the reverse transcriptase performs two functions. It degrades the RNA template and specifically removes the RNA primer from the RNA/DNA hybrid. Following nuclear import, the integrase catalyzes the insertion of the linear, double-stranded viral DNA into the host cell chromosome. Endogenous Pol proteins may have kept, lost or modified their original function during evolution. The sequence is that of Endogenous retrovirus group K member 6 Pol protein (ERVK-6) from Homo sapiens (Human).